A 248-amino-acid chain; its full sequence is Anamorsin homolog (248 aa).

The N-terminal SAM-like domain stretch occupies residues 4–129 (FKGLQKSLYI…ETGSSARLSF (126 aa)). Positions 130 to 161 (AKKNANAANVWKISGDDEELIDEEELLDEEDK) are linker. Cys-172, Cys-181, Cys-184, and Cys-186 together coordinate [2Fe-2S] cluster. The segment at 172–186 (CSTTGKRKACKNCSC) is fe-S binding site A. The [4Fe-4S] cluster site is built by Cys-209, Cys-212, Cys-220, and Cys-223. 2 short sequence motifs (cx2C motif) span residues 209 to 212 (CGNC) and 220 to 223 (CSTC). Residues 209–223 (CGNCYLGDAFRCSTC) are fe-S binding site B.

Belongs to the anamorsin family. As to quaternary structure, monomer. [2Fe-2S] cluster is required as a cofactor. [4Fe-4S] cluster serves as cofactor.

It is found in the cytoplasm. Its subcellular location is the mitochondrion intermembrane space. Component of the cytosolic iron-sulfur (Fe-S) protein assembly (CIA) machinery. Required for the maturation of extramitochondrial Fe-S proteins. Part of an electron transfer chain functioning in an early step of cytosolic Fe-S biogenesis, facilitating the de novo assembly of a [4Fe-4S] cluster on the cytosolic Fe-S scaffold complex. Electrons are transferred from NADPH via a FAD- and FMN-containing diflavin oxidoreductase. Together with the diflavin oxidoreductase, also required for the assembly of the diferric tyrosyl radical cofactor of ribonucleotide reductase (RNR), probably by providing electrons for reduction during radical cofactor maturation in the catalytic small subunit. The chain is Anamorsin homolog from Drosophila sechellia (Fruit fly).